The primary structure comprises 489 residues: Mitogen-activated protein kinase adapter protein MST50 (489 aa).

Residues 1-56 (MSFNTGTAYAESDADDEYERDIHDSSPIDATDAEASPTESDPPSNEHTPTTYGYRS) form a disordered region. Residues 37-54 (PTESDPPSNEHTPTTYGY) are compositionally biased toward polar residues. The 64-residue stretch at 69–132 (WTADECADFI…LRSVYDVKKA (64 aa)) folds into the SAM domain. Disordered stretches follow at residues 207-285 (PLPH…AAER) and 309-379 (SINI…GSNA). Composition is skewed to polar residues over residues 256–265 (PKATSPTHLQ) and 328–346 (ASRSYRSDQPTPSSRSTFA). The 81-residue stretch at 377–457 (SNASVEIFKS…PMFMLRKTNN (81 aa)) folds into the Ras-associating domain.

Interacts with MST7 and MST11. Interacts with MCK1, MKK2 and HIK1.

Mitogen-activated protein kinase adapter protein; part of the MST11-MST7-PMK1 MAP kinase (MAPK) cascade that is essential for appressorium formation, penetration and invasive growth. Binds to the MAPKKK MST11 and the MAPKK MST7 to maintain the stability of the MST11-MST7 complex for the phosphorylation of the MAPK PMK1. Is also involved in the MPS1 and OSM1 MAPK pathways, and especially plays a role in the activation of MPS1 in response to cell wall stress. Its function differs in the 3 MAPK pathways. The chain is Mitogen-activated protein kinase adapter protein MST50 from Pyricularia oryzae (strain 70-15 / ATCC MYA-4617 / FGSC 8958) (Rice blast fungus).